Reading from the N-terminus, the 152-residue chain is uncharacterized protein (152 aa).

Positions 7-133 constitute a VOC domain; the sequence is PALSPHLVVD…FGHHWSLGQP (127 aa).

This is an uncharacterized protein from Mycobacterium bovis (strain ATCC BAA-935 / AF2122/97).